Consider the following 413-residue polypeptide: Putative competence-damage inducible protein (413 aa).

It belongs to the CinA family.

This chain is Putative competence-damage inducible protein, found in Thermoanaerobacter sp. (strain X514).